The sequence spans 185 residues: Ribosome-recycling factor (185 aa).

The interval 137-166 (DGLKKAEKDGDIGQDESRGQSEKVQKMTDD) is disordered.

Belongs to the RRF family.

Its subcellular location is the cytoplasm. Functionally, responsible for the release of ribosomes from messenger RNA at the termination of protein biosynthesis. May increase the efficiency of translation by recycling ribosomes from one round of translation to another. This Agrobacterium fabrum (strain C58 / ATCC 33970) (Agrobacterium tumefaciens (strain C58)) protein is Ribosome-recycling factor.